A 192-amino-acid chain; its full sequence is NADH-quinone oxidoreductase subunit C (192 aa).

A disordered region spans residues 170-192 (LGGIPVEYKGATVPPPDERRQYA).

This sequence belongs to the complex I 30 kDa subunit family. NDH-1 is composed of 14 different subunits. Subunits NuoB, C, D, E, F, and G constitute the peripheral sector of the complex.

It localises to the cell membrane. The catalysed reaction is a quinone + NADH + 5 H(+)(in) = a quinol + NAD(+) + 4 H(+)(out). NDH-1 shuttles electrons from NADH, via FMN and iron-sulfur (Fe-S) centers, to quinones in the respiratory chain. The immediate electron acceptor for the enzyme in this species is believed to be a menaquinone. Couples the redox reaction to proton translocation (for every two electrons transferred, four hydrogen ions are translocated across the cytoplasmic membrane), and thus conserves the redox energy in a proton gradient. The polypeptide is NADH-quinone oxidoreductase subunit C (Acidothermus cellulolyticus (strain ATCC 43068 / DSM 8971 / 11B)).